Here is a 475-residue protein sequence, read N- to C-terminus: Zinc-regulated GTPase metalloprotein activator 1 (475 aa).

50 to 57 lines the GTP pocket; it reads GFLGSGKT. Zn(2+) contacts are provided by Cys116, Cys118, and Cys119. Positions 116–119 match the CXCC motif motif; the sequence is CICC. Residues 119-123 and 229-232 each bind GTP; these read CTMRE and NKCD. The CobW C-terminal domain maps to 302 to 420; sequence IKSFIYKARR…LIESELNNCL (119 aa). The stretch at 440–467 forms a coiled coil; sequence IQLDEELEEEELEEEEEEGEYKDEIEMK. A compositionally biased stretch (acidic residues) spans 445–460; sequence ELEEEELEEEEEEGEY. Residues 445–475 form a disordered region; that stretch reads ELEEEELEEEEEEGEYKDEIEMKVDGSKFKK. Positions 461–475 are enriched in basic and acidic residues; the sequence is KDEIEMKVDGSKFKK.

Belongs to the SIMIBI class G3E GTPase family. ZNG1 subfamily.

It catalyses the reaction GTP + H2O = GDP + phosphate + H(+). In terms of biological role, zinc chaperone that directly transfers zinc cofactor to target metalloproteins, thereby activating them. Zinc is transferred from the CXCC motif in the GTPase domain to the zinc binding site in target proteins in a process requiring GTP hydrolysis. This chain is Zinc-regulated GTPase metalloprotein activator 1, found in Dictyostelium discoideum (Social amoeba).